We begin with the raw amino-acid sequence, 623 residues long: Protein EDS1 (623 aa).

Alanine 2 is modified (N-acetylalanine). The Nucleophile role is filled by serine 123. Catalysis depends on charge relay system residues aspartate 187 and histidine 317. Positions valine 358–arginine 383 form a coiled coil.

In terms of assembly, homodimer. Interacts with RPS4, RPS6, SNC1, SRFR1, AvrRps4 and HopA1. Part of a nuclear complex made of EDS1, PAD4 and SAG101, that can be redirected to the cytoplasm in the presence of an extranuclear form of EDS1. Interacts (via N-terminus) with PAD4 (via N-terminus). Interacts (via N-terminus) with SAG101. EDS1-SAG101 and EDS1-PAD4 form separate complexes in pathogen-unchallenged cells. Part of a nuclear protein complex made of VICTR, PAD4 and EDS1. Interacts with VICTR.

Its subcellular location is the nucleus. The protein resides in the cytoplasm. It is found in the microsome. Positive regulator of basal resistance and of effector-triggered immunity specifically mediated by TIR-NB-LRR (TNL) resistance proteins. Disruption by bacterial effector of EDS1-TIR-NB-LRR resistance protein interactions constitutes the first step in resistance activation. Acts redundantly with salicylic acid to regulate resistance gene-mediated signaling. Triggers early plant defenses and hypersensitive response independently of PAD4, and then recruits PAD4 to potentiate plant defenses through the accumulation of salicylic acid. Nuclear localization is essential for basal and TNL-conditioned immunity and for reprogramming defense gene expression, while cytoplasmic EDS1 is required to induce a complete immune response. Heterodimerization with PAD4 and/or SGA101 is necessary for TNL-mediated effector-triggered immunity. Contributes to nonhost resistance against E.amylovora. Loss of EDS1-PAD4 interaction compromises basal but not TNL-triggered resistance. Necessary for systemic acquired resistance (SAR) signal generation and perception. Has no direct lipase activity. Putative lipase activity is dispensable for immune functions. The polypeptide is Protein EDS1 (Arabidopsis thaliana (Mouse-ear cress)).